Consider the following 87-residue polypeptide: UPF0175 protein AF_0597 (87 aa).

The protein belongs to the UPF0175 family.

This chain is UPF0175 protein AF_0597, found in Archaeoglobus fulgidus (strain ATCC 49558 / DSM 4304 / JCM 9628 / NBRC 100126 / VC-16).